We begin with the raw amino-acid sequence, 257 residues long: tRNA pseudouridine synthase A (257 aa).

The active-site Nucleophile is the Asp-52. Tyr-111 is a binding site for substrate.

Belongs to the tRNA pseudouridine synthase TruA family. Homodimer.

The enzyme catalyses uridine(38/39/40) in tRNA = pseudouridine(38/39/40) in tRNA. Its function is as follows. Formation of pseudouridine at positions 38, 39 and 40 in the anticodon stem and loop of transfer RNAs. In Cereibacter sphaeroides (strain ATCC 17025 / ATH 2.4.3) (Rhodobacter sphaeroides), this protein is tRNA pseudouridine synthase A.